Reading from the N-terminus, the 97-residue chain is Class II hydrophobin 3 (97 aa).

An N-terminal signal peptide occupies residues 1 to 16 (MKFFAAAALFIAGVLA). 4 disulfides stabilise this stretch: cysteine 30/cysteine 79, cysteine 40/cysteine 70, cysteine 41/cysteine 53, and cysteine 80/cysteine 91.

Belongs to the cerato-ulmin hydrophobin family. Homodimer. Homodimers further self-assemble to form highly ordered films at water-air interfaces through intermolecular interactions.

It localises to the secreted. The protein resides in the cell wall. In terms of biological role, aerial growth, conidiation, and dispersal of filamentous fungi in the environment rely upon a capability of their secreting small amphipathic proteins called hydrophobins (HPBs) with low sequence identity. Class I can self-assemble into an outermost layer of rodlet bundles on aerial cell surfaces, conferring cellular hydrophobicity that supports fungal growth, development and dispersal; whereas Class II form highly ordered films at water-air interfaces through intermolecular interactions but contribute nothing to the rodlet structure. The chain is Class II hydrophobin 3 from Trichoderma asperellum (strain ATCC 204424 / CBS 433.97 / NBRC 101777).